The following is a 1025-amino-acid chain: Multidrug resistance protein MdtC (1025 aa).

The next 12 helical transmembrane spans lie at 3 to 23 (FFALFIYRPVATILLSVAITL), 333 to 353 (EVEQTLIISVALVILVVFLFL), 360 to 380 (IIPAVAVPVSLIGTFAAMYLC), 387 to 407 (LSLMALTIATGFVVDDAIVVL), 431 to 451 (VGFTVLSMSLSLVAVFLPLLL), 463 to 483 (FAVTLSVAIGISLLVSLTLTP), 528 to 548 (LVGVVLLGTIALNIWLYISIP), 853 to 873 (VILIIAAIATVYIVLGILYES), 875 to 895 (VHPLTILSTLPSAGVGALLAL), 897 to 917 (LFNAPFSLIALIGIMLLIGIV), 953 to 973 (PIMMTTLAALFGALPLVLSGG), and 984 to 1004 (ITIVGGLVMSQLLTLYTTPVV).

This sequence belongs to the resistance-nodulation-cell division (RND) (TC 2.A.6) family. MdtC subfamily. As to quaternary structure, part of a tripartite efflux system composed of MdtA, MdtB and MdtC. MdtC forms a heteromultimer with MdtB.

The protein localises to the cell inner membrane. In terms of biological role, the MdtABC tripartite complex confers resistance against novobiocin and deoxycholate. In Escherichia coli O1:K1 / APEC, this protein is Multidrug resistance protein MdtC.